Reading from the N-terminus, the 143-residue chain is UPF0201 protein Pcal_0593 (143 aa).

It belongs to the UPF0201 family.

This Pyrobaculum calidifontis (strain DSM 21063 / JCM 11548 / VA1) protein is UPF0201 protein Pcal_0593.